The following is a 277-amino-acid chain: Large ribosomal subunit protein uL2 (277 aa).

2 disordered regions span residues 32 to 58 (KSLTKGKVSRAGRDSSGRISVRRRGGG) and 225 to 277 (VAMN…RRNN).

The protein belongs to the universal ribosomal protein uL2 family. In terms of assembly, part of the 50S ribosomal subunit. Forms a bridge to the 30S subunit in the 70S ribosome.

In terms of biological role, one of the primary rRNA binding proteins. Required for association of the 30S and 50S subunits to form the 70S ribosome, for tRNA binding and peptide bond formation. It has been suggested to have peptidyltransferase activity; this is somewhat controversial. Makes several contacts with the 16S rRNA in the 70S ribosome. The polypeptide is Large ribosomal subunit protein uL2 (Borrelia duttonii (strain Ly)).